A 164-amino-acid polypeptide reads, in one-letter code: Transcriptional repressor NrdR (164 aa).

The segment at 3-34 (CPFCRHDDTQVVDSRVSEDGAAIRRRRRCPAC) is a zinc-finger region. The 91-residue stretch at 49-139 (PSVVKKDGSR…VYRRFEDVSE (91 aa)) folds into the ATP-cone domain.

This sequence belongs to the NrdR family. Requires Zn(2+) as cofactor.

Negatively regulates transcription of bacterial ribonucleotide reductase nrd genes and operons by binding to NrdR-boxes. This is Transcriptional repressor NrdR from Paraburkholderia phymatum (strain DSM 17167 / CIP 108236 / LMG 21445 / STM815) (Burkholderia phymatum).